The primary structure comprises 347 residues: UDP-3-O-acylglucosamine N-acyltransferase (347 aa).

H241 acts as the Proton acceptor in catalysis.

Belongs to the transferase hexapeptide repeat family. LpxD subfamily. Homotrimer.

It catalyses the reaction a UDP-3-O-[(3R)-3-hydroxyacyl]-alpha-D-glucosamine + a (3R)-hydroxyacyl-[ACP] = a UDP-2-N,3-O-bis[(3R)-3-hydroxyacyl]-alpha-D-glucosamine + holo-[ACP] + H(+). The protein operates within bacterial outer membrane biogenesis; LPS lipid A biosynthesis. In terms of biological role, catalyzes the N-acylation of UDP-3-O-acylglucosamine using 3-hydroxyacyl-ACP as the acyl donor. Is involved in the biosynthesis of lipid A, a phosphorylated glycolipid that anchors the lipopolysaccharide to the outer membrane of the cell. The polypeptide is UDP-3-O-acylglucosamine N-acyltransferase (Neisseria gonorrhoeae (strain ATCC 700825 / FA 1090)).